The primary structure comprises 1128 residues: MDGRTPRPQDAPARRKPKAKAPLPPAETKYTDVSSAADSVESTAFIMEQKENMIDKDVELSVVLPGDIIKSTTVHGSKPMMDLLIFLCAQYHLNPSSYTIDLLSAEQNHIKFKPNTPIGMLEVEKVILKPKMLDKKKPTPIIPEKTVRVVINFKKTQKTIVRVSPHASLQELAPIICSKCEFDPLHTLLLKDYQSQEPLDLTKSLNDLGLRELYAMDVNRESCQISQNLDIMKEKENKGFFSFFQRSKKKRDQTASAPATPLVNKHRPTFTRSNTISKPYISNTLPSDAPKKRRAPLPPMPASQSVPQDLAHIQERPASCIVKSMSVDETDKSPCEAGRVRAGSLQLSSMSAGNSSLRRTKRKAPSPPSKIPPHQSDENSRVTALQPVDGVPPDSASEANSPEELSSPAGISSDYSLEEIDEKEELSEVPKVEAENISPKSQDIPFVSTDIINTLKNDPDSALGNGSGEFSQNSMEEKQETKSTDGQEPHSVVYDTSNGKKVVDSIRNLKSLGPNQENVVQNEIIVYPENTEDNMKNGVKKTEINVEGVAKNNNIDMEVERPSNSEAHETDTAISYKENHLAASSVPDQKLNQPSAEKTKDAAIQTTPSCNSFDGKHQDHNLSDSKVEECVQTSNNNISTQHSCLSSQDSVNTSREFRSQGTLIIHSEDPLTVKDPICAHGNDDLLPPVDRIDKNSTASYLKNYPLYRQDYNPKPKPSNEITREYIPKIGMTTYKIVPPKSLEISKDWQSETIEYKDDQDMHALGKKHTHENVKETAIQTEDSAISESPEEPLPNLKPKPNLRTEHQVPSSVSSPDDAMVSPLKPAPKMTRDTGTAPFAPNLEEINNILESKFKSRASNAQAKPSSFFLQMQKRVSGHYVTSAAAKSVHAAPNPAPKELTNKEAERDMLPSPEQTLSPLSKMPHSVPQPLVEKTDDDVIGQAPAEASPPPIAPKPVTIPASQVSTQNLKTLKTFGAPRPYSSSGPSPFALAVVKRSQSFSKERTESPSASALVQPPANTEEGKTHSVNKFVDIPQLGVSDKENNSAHNEQNSQIPTPTDGPSFTVMRQSSLTFQSSDPEQMRQSLLTAIRSGEAAAKLKRVTIPSNTISVNGRSRLSHSMSPDAQDGH.

Residues 1–35 (MDGRTPRPQDAPARRKPKAKAPLPPAETKYTDVSS) are disordered. Threonine 139 carries the post-translational modification Phosphothreonine. Phosphoserine is present on residues serine 204, serine 222, and serine 256. Disordered stretches follow at residues 249-309 (KKRD…VPQD), 325-441 (MSVD…SPKS), and 454-499 (TLKN…TSNG). Threonine 260 bears the Phosphothreonine mark. The segment covering 270 to 286 (FTRSNTISKPYISNTLP) has biased composition (polar residues). The residue at position 273 (serine 273) is a Phosphoserine. Threonine 284 bears the Phosphothreonine mark. Residues 291-296 (KKRRAP) carry the KKRRAP 1 motif. Phosphoserine is present on residues serine 326, serine 333, serine 344, and serine 356. Over residues 345–357 (LQLSSMSAGNSSL) the composition is skewed to polar residues. Residues 360-365 (TKRKAP) carry the KKRRAP 2 motif. Over residues 397–415 (SEANSPEELSSPAGISSDY) the composition is skewed to polar residues. The span at 416 to 425 (SLEEIDEKEE) shows a compositional bias: acidic residues. Phosphoserine occurs at positions 438, 441, 461, 471, and 474. Residues 475-488 (MEEKQETKSTDGQE) show a composition bias toward basic and acidic residues. A phosphoserine mark is found at serine 563, serine 584, serine 786, serine 813, serine 814, and serine 821. Disordered stretches follow at residues 780-840 (TEDS…PFAP), 882-964 (SAAA…SQVS), 995-1081 (RSQS…PEQM), and 1103-1128 (IPSN…QDGH). Over residues 899–908 (LTNKEAERDM) the composition is skewed to basic and acidic residues. Serine 911, serine 917, serine 947, serine 1069, and serine 1070 each carry phosphoserine. Polar residues-rich tracts occupy residues 1045–1081 (SAHN…PEQM) and 1103–1122 (IPSN…SMSP). The WH2 domain occupies 1081–1101 (MRQSLLTAIRSGEAAAKLKRV). Serine 1121 carries the phosphoserine modification.

The chain is Cordon-bleu protein-like 1 from Homo sapiens (Human).